Reading from the N-terminus, the 165-residue chain is uncharacterized protein (165 aa).

Residues 20–40 (INLIASIVLWLLFVITVIGTF) form a helical membrane-spanning segment. Asparagine 51 carries an N-linked (GlcNAc...) asparagine; by host glycan. The helical transmembrane segment at 97-117 (VGIIVILIFMLMIIMNGFYQM) threads the bilayer.

Its subcellular location is the membrane. This is an uncharacterized protein from Acanthamoeba polyphaga (Amoeba).